Here is a 429-residue protein sequence, read N- to C-terminus: Serine--tRNA ligase (429 aa).

Position 234-236 (234-236) interacts with L-serine; sequence TSE. ATP contacts are provided by residues 265–267 and valine 281; that span reads RKE. Glutamate 288 is an L-serine binding site. Residue 352-355 participates in ATP binding; the sequence is ELVS. Threonine 389 is a binding site for L-serine.

This sequence belongs to the class-II aminoacyl-tRNA synthetase family. Type-1 seryl-tRNA synthetase subfamily. As to quaternary structure, homodimer. The tRNA molecule probably binds across the dimer.

It carries out the reaction tRNA(Ser) + L-serine + ATP = L-seryl-tRNA(Ser) + AMP + diphosphate + H(+). The enzyme catalyses tRNA(Sec) + L-serine + ATP = L-seryl-tRNA(Sec) + AMP + diphosphate + H(+). It functions in the pathway aminoacyl-tRNA biosynthesis; selenocysteinyl-tRNA(Sec) biosynthesis; L-seryl-tRNA(Sec) from L-serine and tRNA(Sec): step 1/1. Its function is as follows. Catalyzes the attachment of serine to tRNA(Ser). Is also probably able to aminoacylate tRNA(Sec) with serine, to form the misacylated tRNA L-seryl-tRNA(Sec), which will be further converted into selenocysteinyl-tRNA(Sec). This Encephalitozoon cuniculi (strain GB-M1) (Microsporidian parasite) protein is Serine--tRNA ligase.